The following is an 840-amino-acid chain: Homeobox-leucine zipper protein HOX9 (840 aa).

Disordered stretches follow at residues 1–26 (MAAA…AGMD) and 135–160 (NPSL…DASN). Positions 12–21 (GSDGGGGGYD) are enriched in gly residues. A DNA-binding region (homeobox) is located at residues 26-89 (DSGKYVRYTP…NRRCRDKQRK (64 aa)). Positions 86–135 (KQRKEASRLQAVNRKLTAMNKLLMEENERLQKQVSQLVHENAYMKQQLQN) form a coiled coil. An START domain is found at 157 to 385 (DASNPSGLLT…IAQETSGEVV (229 aa)).

This sequence belongs to the HD-ZIP homeobox family. Class III subfamily. In terms of tissue distribution, expressed in seedlings, roots, stems, leaf sheaths and blades and panicles.

The protein localises to the nucleus. In terms of biological role, probable transcription factor. In Oryza sativa subsp. japonica (Rice), this protein is Homeobox-leucine zipper protein HOX9 (HOX9).